The sequence spans 225 residues: Small ribosomal subunit protein uS3 (225 aa).

One can recognise a KH type-2 domain in the interval 38–106 (LRKFLQGKLQ…EVSLNIVEIR (69 aa)).

It belongs to the universal ribosomal protein uS3 family. As to quaternary structure, part of the 30S ribosomal subunit. Forms a tight complex with proteins S10 and S14.

Binds the lower part of the 30S subunit head. Binds mRNA in the 70S ribosome, positioning it for translation. This chain is Small ribosomal subunit protein uS3, found in Rhodospirillum centenum (strain ATCC 51521 / SW).